The following is a 936-amino-acid chain: Aftiphilin (936 aa).

Positions 1–36 (MEPDIIRMYSSSPPPLDNGAEDDDDDEFGEFGGFSE) are disordered. The segment at 1–523 (MEPDIIRMYS…ARKSSGTGTE (523 aa)) is interaction with AP1G1, AP1G2, GGA1 and GGA3. Acidic residues predominate over residues 19–29 (GAEDDDDDEFG). Positions 28–31 (FGEF) match the WXXF motif 1 motif. Residue S151 is modified to Phosphoserine. Disordered stretches follow at residues 197–216 (TDDL…STHS) and 374–409 (KTSD…LDDS). Residues 374 to 389 (KTSDDEVGSPKEESRK) are compositionally biased toward basic and acidic residues. The tract at residues 386–610 (ESRKFTNFQS…EAWQSHRTDE (225 aa)) is interaction with AP1G1. S395 bears the Phosphoserine mark. The short motif at 432 to 435 (FGDF) is the WXXF motif 2 element. The WXXF motif 3 (partial) signature appears at 436 to 438 (GDF). The WXXF motif 4 signature appears at 478–481 (FGEF). At S518 the chain carries Phosphoserine. A disordered region spans residues 589 to 637 (GDQQATESHHRKEAWQSHRTDENIDTPGTPKTHSVPSATSKGAVASGHL). A compositionally biased stretch (basic and acidic residues) spans 595–610 (ESHHRKEAWQSHRTDE). Residue T617 is modified to Phosphothreonine. Residues 617–628 (TPKTHSVPSATS) are compositionally biased toward polar residues. Residues 716 to 718 (YQW) carry the CLTCL1/Clathrin-binding motif. Residues 825–829 (LLNLD) are clathrin-binding.

As to quaternary structure, self-associates. Interacts with GGA1 (via GAE domain). Interacts with GGA3 (via GAE domain), AP1G1 (via GAE domain) and AP1G2 (via GAE domain). Component of the aftiphilin/p200/gamma-synergin complex, at least composed of AFTPH/aftiphilin, HEATR5B/p200a and SYNRG/gamma-synergin, which plays a role in the AP1G1/AP-1-mediated protein trafficking from early to recycling endosomes. Within the complex interacts with HEATR5B/p200a and SYNRG/gamma-synergin; the interactions are direct. Interacts with AP1G1/AP-1; the interaction is required to recruit AFTPH/aftiphilin to the perinuclear region of the cell. Interacts with CLTCL1/Clathrin.

The protein resides in the cytoplasm. It is found in the perinuclear region. The protein localises to the cytoplasmic vesicle. It localises to the clathrin-coated vesicle. Functionally, component of clathrin-coated vesicles. Component of the aftiphilin/p200/gamma-synergin complex, which plays roles in AP1G1/AP-1-mediated protein trafficking including the trafficking of transferrin from early to recycling endosomes, and the membrane trafficking of furin and the lysosomal enzyme cathepsin D between the trans-Golgi network (TGN) and endosomes. The polypeptide is Aftiphilin (AFTPH) (Homo sapiens (Human)).